Consider the following 179-residue polypeptide: Large ribosomal subunit protein uL5 (179 aa).

It belongs to the universal ribosomal protein uL5 family. Part of the 50S ribosomal subunit; part of the 5S rRNA/L5/L18/L25 subcomplex. Contacts the 5S rRNA and the P site tRNA. Forms a bridge to the 30S subunit in the 70S ribosome.

Functionally, this is one of the proteins that bind and probably mediate the attachment of the 5S RNA into the large ribosomal subunit, where it forms part of the central protuberance. In the 70S ribosome it contacts protein S13 of the 30S subunit (bridge B1b), connecting the 2 subunits; this bridge is implicated in subunit movement. Contacts the P site tRNA; the 5S rRNA and some of its associated proteins might help stabilize positioning of ribosome-bound tRNAs. This Deinococcus geothermalis (strain DSM 11300 / CIP 105573 / AG-3a) protein is Large ribosomal subunit protein uL5.